Here is a 432-residue protein sequence, read N- to C-terminus: Glutamyl-tRNA reductase (432 aa).

Residues 55–58, Ser-114, 119–121, and Gln-125 contribute to the substrate site; these read TCNR and ETQ. Cys-56 (nucleophile) is an active-site residue. 194 to 199 provides a ligand contact to NADP(+); it reads GAGEMI.

Belongs to the glutamyl-tRNA reductase family. Homodimer.

It carries out the reaction (S)-4-amino-5-oxopentanoate + tRNA(Glu) + NADP(+) = L-glutamyl-tRNA(Glu) + NADPH + H(+). The protein operates within porphyrin-containing compound metabolism; protoporphyrin-IX biosynthesis; 5-aminolevulinate from L-glutamyl-tRNA(Glu): step 1/2. In terms of biological role, catalyzes the NADPH-dependent reduction of glutamyl-tRNA(Glu) to glutamate 1-semialdehyde (GSA). The protein is Glutamyl-tRNA reductase of Burkholderia thailandensis (strain ATCC 700388 / DSM 13276 / CCUG 48851 / CIP 106301 / E264).